The primary structure comprises 89 residues: Small ribosomal subunit protein uS15 (89 aa).

Belongs to the universal ribosomal protein uS15 family. In terms of assembly, part of the 30S ribosomal subunit. Forms a bridge to the 50S subunit in the 70S ribosome, contacting the 23S rRNA.

Its function is as follows. One of the primary rRNA binding proteins, it binds directly to 16S rRNA where it helps nucleate assembly of the platform of the 30S subunit by binding and bridging several RNA helices of the 16S rRNA. In terms of biological role, forms an intersubunit bridge (bridge B4) with the 23S rRNA of the 50S subunit in the ribosome. This is Small ribosomal subunit protein uS15 from Colwellia psychrerythraea (strain 34H / ATCC BAA-681) (Vibrio psychroerythus).